The primary structure comprises 1789 residues: Genome polyprotein (1789 aa).

The segment at 1-25 (MMMASKDVVPTAASSENANNNSSIK) is disordered. The interaction with host MAP1LC3A/LC3 stretch occupies residues 1–183 (MMMASKDVVP…MCPLPPVDQR (183 aa)). Low complexity predominate over residues 12–23 (AASSENANNNSS). Positions 184 to 398 (STTPATEPTI…ASLLPDFHLQ (215 aa)) are interaction with NTPase. The tract at residues 301–398 (HPTQDWSRDT…ASLLPDFHLQ (98 aa)) is interaction with NS4. Host ER membrane association stretches follow at residues 318–349 (KLEM…KPLN) and 360–398 (TFMG…FHLQ). An interaction with NS1-2 and NS4 and homooligomerization region spans residues 399–574 (GPEDLARDLV…GKTKAAEHLA (176 aa)). The 166-residue stretch at 532 to 697 (RISMARAALA…EHTRKVSPGD (166 aa)) folds into the SF3 helicase domain. An ATP-binding site is contributed by 560 to 567 (GPPGIGKT). Residues 651-756 (AIVITTNAPG…AVALTMERQD (106 aa)) are important for mitochondrion targeting. The tract at residues 826–832 (YIIESDG) is functions as endoplasmic reticulum export signal. Residues 865 to 910 (RAVAYASCFQSAITTILQMAGSALVINRAVKRMFGTRTAAMALEGP) are host membrane association. The interval 958-981 (DAVPEGKNKGKTKKGRGRKNNYNA) is disordered. Over residues 966 to 976 (KGKTKKGRGRK) the composition is skewed to basic residues. The interval 989-994 (DEEYEE) is acidic. Residue Tyr992 is modified to O-(5'-phospho-RNA)-tyrosine. An interaction with host EIF4G region spans residues 1084-1100 (WADDDREVDYNEKINFE). The Peptidase C37 domain occupies 1101 to 1281 (APPTLWSRVT…QAGEGETALE (181 aa)). Catalysis depends on for 3CLpro activity residues His1130, Glu1154, and Cys1239. In terms of domain architecture, RdRp catalytic spans 1516-1637 (KNHFDADYTA…STDIDFDPAR (122 aa)). Mg(2+) contacts are provided by Asp1520, Asp1522, Asp1624, and Glu1625.

In terms of assembly, homodimer. Homooligomer. Interacts with NTPase; this interaction increases the proapoptotic activity of the NTPase and is crucial for the formation of the viral replication complex. Interacts with NS4; this interaction is crucial for the formation of the viral replication complex. Interacts (via N-terminus) with host VAPA. Interacts with host MAP1LC3A/LC3; this interaction does not seem to be linked to host autophagy, but rather plays a role in the formation of viral factories. Homooligomer. Interacts with NS1-2; this interaction increases the proapoptotic activity of the NTPase and is crucial for the formation of the viral replication complex. Interacts with NS4; this interaction increases the proapoptotic activity of the NTPase. As to quaternary structure, homodimer. Monomer; in solution. In terms of assembly, interacts with NTPase; this interaction increases the proapoptotic activity of the NTPase. Interacts with NS1-2; this interaction is crucial for the formation of the viral replication complex. Monomer. Interacts with the RNA-directed RNA polymerase; this interaction induces the multimerization of the RdRp and enhances its activity. Interacts with host IEF4G1; this interaction plays a role in translation of viral proteins. As to quaternary structure, homohexamer; also forms fibrous hexameric oligomer. Interacts with the viral genome-linked protein; this interaction induces the multimerization of the RdRp and enhances its activity. Mg(2+) is required as a cofactor. Mn(2+) serves as cofactor. Specific enzymatic cleavages in vivo yield mature proteins. 3CLpro is first autocatalytically cleaved, then processes the whole polyprotein. NS1/2-3 and NS3-4 sites are cleaved rapidly and NS4-5, NS5-6, and NS6-7 sites are processed subsequently and less efficiently. Post-translationally, VPg is uridylylated by the polymerase and is covalently attached to the 5'-end of the polyadenylated genomic and subgenomic RNAs. This uridylylated form acts as a nucleotide-peptide primer for the polymerase. In terms of processing, cleaved by host CASP3/caspase 3 at 18-22 h.p.i. The cleavage allows NS1 secretion, which is essential for intestinal infection and resistance to IFN-lambda.

The protein resides in the host Golgi apparatus membrane. The protein localises to the secreted. It is found in the host endoplasmic reticulum membrane. It localises to the host cytoplasm. Its subcellular location is the host perinuclear region. The enzyme catalyses a ribonucleoside 5'-triphosphate + H2O = a ribonucleoside 5'-diphosphate + phosphate + H(+). It catalyses the reaction Endopeptidase with a preference for cleavage when the P1 position is occupied by Glu-|-Xaa and the P1' position is occupied by Gly-|-Yaa.. The catalysed reaction is RNA(n) + a ribonucleoside 5'-triphosphate = RNA(n+1) + diphosphate. With respect to regulation, inhibited by the chemical compound K36/GC376, which covalently binds to the nucleophilic cysteine residue. Inhibited by various macrocyclic inhibitors. Inhibited by the guanidine salt GuHCl. In terms of biological role, induces the proliferation of the host smooth ER membranes forming long tubular structures. These remodeled membranes probably form the viral factories that contain the replication complex. Induces the disassembly of host Golgi. May play a role in viral replication by interacting with host VAPA, a vesicle-associated membrane protein that plays a role in SNARE-mediated vesicle fusion. This interaction may target replication complex to intracellular membranes. Displays NTPase activity and RNA helix-unwinding activity. Displays RNA chaperone-like activity and destabilizes dsRNA. Induces the formation of convoluted membranes derived from the host ER. These remodeled membranes probably form the viral factories that contain the replication complex. Initiates host cell death by targeting the mitochondrial outer membrane, leading to the permeabilization of mitochondria, programmed host cell death and viral egress. Probably plays a role in preventing the assembly of host stress granules. Its function is as follows. Probable key protein responsible for the formation of membrane alterations by the virus. Induces the formation of convoluted membranes derived from the host ER. These remodeled membranes probably form the viral factories that contain the replication complex. May play a role in targeting replication complex to intracellular membranes. Induces the disassembly of host Golgi and antagonism of Golgi-dependent cellular protein secretion, probably via the mislocalization of COPII-coated vesicles. Functionally, viral genome-linked protein is covalently linked to the 5'-end of the positive-strand, negative-strand genomic RNAs and subgenomic RNA. Acts as a genome-linked replication primer. May recruit ribosome to viral RNA thereby promoting viral proteins translation. Interacts with host translation initiation complex to allow the translation of viral proteins. Induces the formation of aggregates of RNA-directed RNA polymerase in the presence of RNA. Through its interaction with the viral RNA-directed RNA polymerase, plays a crucial role in enhancing the polymerase activity. In terms of biological role, processes the polyprotein. 3CLpro-RdRp is first released by autocleavage, then all other proteins are cleaved. May cleave host polyadenylate-binding protein thereby inhibiting cellular translation. Replicates genomic and antigenomic RNA by recognizing replications specific signals. Also transcribes a subgenomic mRNA by initiating RNA synthesis internally on antigenomic RNA. This sgRNA codes for structural proteins. Catalyzes the covalent attachment VPg with viral RNAs. This chain is Genome polyprotein, found in Norovirus (strain Human/NoV/United States/Norwalk/1968/GI) (Hu/NV/NV/1968/US).